The primary structure comprises 201 residues: 3-isopropylmalate dehydratase small subunit (201 aa).

The protein belongs to the LeuD family. LeuD type 1 subfamily. Heterodimer of LeuC and LeuD.

The catalysed reaction is (2R,3S)-3-isopropylmalate = (2S)-2-isopropylmalate. Its pathway is amino-acid biosynthesis; L-leucine biosynthesis; L-leucine from 3-methyl-2-oxobutanoate: step 2/4. In terms of biological role, catalyzes the isomerization between 2-isopropylmalate and 3-isopropylmalate, via the formation of 2-isopropylmaleate. This Allorhizobium ampelinum (strain ATCC BAA-846 / DSM 112012 / S4) (Agrobacterium vitis (strain S4)) protein is 3-isopropylmalate dehydratase small subunit.